We begin with the raw amino-acid sequence, 100 residues long: UPF0213 protein CKO_04549 (100 aa).

The GIY-YIG domain occupies 2–77; the sequence is TPWYLYLIRT…KRLTKRQKER (76 aa).

It belongs to the UPF0213 family.

This chain is UPF0213 protein CKO_04549, found in Citrobacter koseri (strain ATCC BAA-895 / CDC 4225-83 / SGSC4696).